Here is a 100-residue protein sequence, read N- to C-terminus: NADH-quinone oxidoreductase subunit K 2 (100 aa).

3 consecutive transmembrane segments (helical) span residues 4 to 24 (LWWYIVLGVVLFVIGAAGVLI), 28 to 48 (ILVVLMSLELLLNSVNINFIA), and 60 to 80 (IFAIFVIAITAAEVAVALGIL).

This sequence belongs to the complex I subunit 4L family. NDH-1 is composed of 14 different subunits. Subunits NuoA, H, J, K, L, M, N constitute the membrane sector of the complex.

The protein resides in the cell inner membrane. The catalysed reaction is a quinone + NADH + 5 H(+)(in) = a quinol + NAD(+) + 4 H(+)(out). In terms of biological role, NDH-1 shuttles electrons from NADH, via FMN and iron-sulfur (Fe-S) centers, to quinones in the respiratory chain. The immediate electron acceptor for the enzyme in this species is believed to be ubiquinone. Couples the redox reaction to proton translocation (for every two electrons transferred, four hydrogen ions are translocated across the cytoplasmic membrane), and thus conserves the redox energy in a proton gradient. The sequence is that of NADH-quinone oxidoreductase subunit K 2 from Rhizobium etli (strain ATCC 51251 / DSM 11541 / JCM 21823 / NBRC 15573 / CFN 42).